We begin with the raw amino-acid sequence, 341 residues long: Cysteine-rich with EGF-like domain protein 2 (341 aa).

An N-terminal signal peptide occupies residues 1 to 24 (MLLSCSIFRLFCIILLLQLGSIYT). The EGF-like domain maps to 136–178 (DCNTCIGGADRPCHGNGKCDGDGTRAGNGKCSCDEGYDGEFCL). 3 disulfide bridges follow: Cys-140–Cys-154, Cys-148–Cys-166, and Cys-168–Cys-177. Asn-190 carries an N-linked (GlcNAc...) asparagine glycan. FU repeat units lie at residues 193–248 (FFLC…DQYC) and 254–308 (SFSC…NQHC). An EGF-like 2; calcium-binding; truncated domain is found at 291-317 (DIDECTEDPASCSDNQHCLNTDGSFSC).

The protein belongs to the CRELD family.

It localises to the secreted. It is found in the endoplasmic reticulum. Possible role in neuronal acetylcholine receptor transport. This Danio rerio (Zebrafish) protein is Cysteine-rich with EGF-like domain protein 2 (creld2).